The primary structure comprises 619 residues: 2-succinyl-5-enolpyruvyl-6-hydroxy-3-cyclohexene-1-carboxylate synthase (619 aa).

Residues 385–398 (SSAHQSLAATNSDS) show a composition bias toward polar residues. The tract at residues 385-415 (SSAHQSLAATNSDSSTDDIIENTDEEGSNES) is disordered. The span at 399–413 (STDDIIENTDEEGSN) shows a compositional bias: acidic residues.

It belongs to the TPP enzyme family. MenD subfamily. Homodimer. Mg(2+) is required as a cofactor. The cofactor is Mn(2+). It depends on thiamine diphosphate as a cofactor.

The catalysed reaction is isochorismate + 2-oxoglutarate + H(+) = 5-enolpyruvoyl-6-hydroxy-2-succinyl-cyclohex-3-ene-1-carboxylate + CO2. It participates in quinol/quinone metabolism; 1,4-dihydroxy-2-naphthoate biosynthesis; 1,4-dihydroxy-2-naphthoate from chorismate: step 2/7. Its pathway is quinol/quinone metabolism; menaquinone biosynthesis. In terms of biological role, catalyzes the thiamine diphosphate-dependent decarboxylation of 2-oxoglutarate and the subsequent addition of the resulting succinic semialdehyde-thiamine pyrophosphate anion to isochorismate to yield 2-succinyl-5-enolpyruvyl-6-hydroxy-3-cyclohexene-1-carboxylate (SEPHCHC). The protein is 2-succinyl-5-enolpyruvyl-6-hydroxy-3-cyclohexene-1-carboxylate synthase of Haloquadratum walsbyi (strain DSM 16790 / HBSQ001).